Here is a 264-residue protein sequence, read N- to C-terminus: Small ribosomal subunit protein eS1 (264 aa).

It belongs to the eukaryotic ribosomal protein eS1 family. In terms of assembly, component of the small ribosomal subunit. Mature ribosomes consist of a small (40S) and a large (60S) subunit. The 40S subunit contains about 33 different proteins and 1 molecule of RNA (18S). The 60S subunit contains about 49 different proteins and 3 molecules of RNA (25S, 5.8S and 5S).

Its subcellular location is the cytoplasm. This chain is Small ribosomal subunit protein eS1, found in Babesia bovis.